We begin with the raw amino-acid sequence, 468 residues long: Heat stress transcription factor A-1e (468 aa).

A DNA-binding region spans residues 21-115 (IPPFLSKTYD…ILKSIVRRKP (95 aa)). The interval 133–199 (ACVEVGKFGL…QMMSFLAKAV (67 aa)) is hydrophobic repeat HR-A/B. The span at 211–220 (QSNEANQHIS) shows a compositional bias: polar residues. Disordered stretches follow at residues 211–244 (QSNE…VNGL) and 268–309 (QMSN…PEVT). The Nuclear localization signal motif lies at 223–227 (NKKRR). Residues 277–305 (SLSSNNGSFLLGDVPNSNISDNGSSSNGS) show a composition bias toward low complexity. Residues 402 to 411 (DSFWEQFIGE) carry the AHA motif. Residues 454–461 (LTEQMGLL) carry the Nuclear export signal motif.

This sequence belongs to the HSF family. Class A subfamily. In terms of assembly, homotrimer. Post-translationally, exhibits temperature-dependent phosphorylation.

The protein localises to the cytoplasm. It localises to the nucleus. Its function is as follows. Transcriptional activator that specifically binds DNA sequence 5'-AGAAnnTTCT-3' known as heat shock promoter elements (HSE). The sequence is that of Heat stress transcription factor A-1e (HSFA1E) from Arabidopsis thaliana (Mouse-ear cress).